The chain runs to 508 residues: Maturase K (508 aa).

The protein belongs to the intron maturase 2 family. MatK subfamily.

It localises to the plastid. The protein resides in the chloroplast. Its function is as follows. Usually encoded in the trnK tRNA gene intron. Probably assists in splicing its own and other chloroplast group II introns. The polypeptide is Maturase K (Lupinus cosentinii (West Australian blue lupine)).